The sequence spans 1818 residues: Integrin beta-4 (1818 aa).

Positions 1–28 (MAGPCCSPWVKLLLLAAMLSASLPGDLA) are cleaved as a signal peptide. Residues 29-712 (NRCKKAQVKS…HKKKDCPPGS (684 aa)) are Extracellular-facing. One can recognise a PSI domain in the interval 30–74 (RCKKAQVKSCTECIRVDKSCAYCTDELFKERRCNTQAELLAAGCR). 8 disulfide bridges follow: cysteine 31–cysteine 49, cysteine 39–cysteine 457, cysteine 42–cysteine 62, cysteine 52–cysteine 73, cysteine 246–cysteine 289, cysteine 459–cysteine 478, cysteine 470–cysteine 481, and cysteine 483–cysteine 492. The 179-residue stretch at 132–310 (DLYILMDFSN…KTQDYPSVPT (179 aa)) folds into the VWFA domain. The Mg(2+) site is built by serine 140 and serine 142. 4 residues coordinate Ca(2+): serine 142, aspartate 145, aspartate 146, and aspartate 177. Residues 195–200 (WPNSDP) form an involved in NRG1- and IGF1-binding region. 4 residues coordinate Ca(2+): asparagine 229, aspartate 231, proline 233, and glutamate 234. Residue glutamate 234 coordinates Mg(2+). Residue asparagine 328 is glycosylated (N-linked (GlcNAc...) asparagine). Residue glutamate 351 coordinates Ca(2+). I-EGF domains lie at 459-493 (CELQKEVRSARCHFRGDFMCGHCVCNEGWSGKTCN), 494-539 (CSTG…HFCE), 540-576 (YDNFQCPRTSGFLCNDRGRCSMGECVCEPGWTGRSCD), and 577-617 (CPLS…TTCE). Residues 473-475 (RGD) carry the Cell attachment site motif. Asparagine 493 carries N-linked (GlcNAc...) asparagine glycosylation. Disulfide bonds link cysteine 494–cysteine 522, cysteine 505–cysteine 520, cysteine 514–cysteine 525, cysteine 527–cysteine 538, cysteine 545–cysteine 559, cysteine 553–cysteine 564, cysteine 566–cysteine 575, cysteine 577–cysteine 600, cysteine 584–cysteine 598, cysteine 592–cysteine 603, and cysteine 605–cysteine 616. An N-linked (GlcNAc...) asparagine glycan is attached at asparagine 581. A glycan (N-linked (GlcNAc...) asparagine) is linked at asparagine 619. 4 disulfide bridges follow: cysteine 628–cysteine 673, cysteine 634–cysteine 653, cysteine 637–cysteine 650, and cysteine 682–cysteine 708. A glycan (N-linked (GlcNAc...) asparagine) is linked at asparagine 697. A helical transmembrane segment spans residues 713–733 (FWWLIPLLIFLLLLLALLLLL). The interval 734-751 (CWKYCACCKACLGLLPCC) is palmitoylated on several cysteines. At 734 to 1818 (CWKYCACCKA…THMDQQFFQT (1085 aa)) the chain is on the cytoplasmic side. Position 773 is a phosphoserine (serine 773). In terms of domain architecture, Calx-beta spans 981-1086 (VNITIIKEQA…QVRRFQVQLS (106 aa)). The Cell attachment site motif lies at 1005–1007 (RGD). Serine 1071 and serine 1121 each carry phosphoserine. The tract at residues 1115–1137 (INQTLSSPPPPHGDLGAPQNPNA) is disordered. Fibronectin type-III domains follow at residues 1131–1220 (APQN…THQE) and 1224–1323 (EPGR…TQPK). The disordered stretch occupies residues 1402–1433 (LSASSGRSDEDGSVAGGVEGEGSGWIRGATPR). The segment covering 1415–1426 (VAGGVEGEGSGW) has biased composition (gly residues). Serine 1451, serine 1454, and serine 1470 each carry phosphoserine. Residue threonine 1483 is modified to Phosphothreonine. Serine 1490 is subject to Phosphoserine. Threonine 1526 is modified (phosphothreonine). Fibronectin type-III domains lie at 1526–1621 (TPTR…VHPQ) and 1639–1735 (APGP…SQVG). At serine 1787 the chain carries Phosphoserine.

This sequence belongs to the integrin beta chain family. As to quaternary structure, heterodimer of an alpha and a beta subunit. Beta-4 associates with alpha-6. Interacts (via cytoplasmic region) with COL17A1 (via cytoplasmic region). Interacts (via cytoplasmic region) with DST isoform 3 (via N-terminus). Interacts (via cytoplasmic domain) with DST (via N-terminus). Interacts with RAC1. ITGA6:ITGB4 is found in a ternary complex with NRG1 and ERBB3. ITGA6:ITGB4 is found in a ternary complex with IGF1 and IGF1R. ITGA6:ITGB4 interacts with IGF2. Interacts with TMEM268; this interaction prevents ITGB4 degradation. Palmitoylated by DHHC3 at several cysteines of the membrane-proximal region, enhancing stability and cell surface expression. Palmitoylation also promotes secondary association with tertaspanins.

The protein resides in the cell membrane. It localises to the cell junction. Its subcellular location is the hemidesmosome. Integrin alpha-6/beta-4 is a receptor for laminin. It plays a critical structural role in the hemidesmosome of epithelial cells. Is required for the regulation of keratinocyte polarity and motility. ITGA6:ITGB4 binds to NRG1 (via EGF domain) and this binding is essential for NRG1-ERBB signaling. ITGA6:ITGB4 binds to IGF1 and this binding is essential for IGF1 signaling. ITGA6:ITGB4 binds to IGF2 and this binding is essential for IGF2 signaling. This chain is Integrin beta-4 (Itgb4), found in Mus musculus (Mouse).